A 92-amino-acid chain; its full sequence is Small ribosomal subunit protein uS19 (92 aa).

It belongs to the universal ribosomal protein uS19 family.

Protein S19 forms a complex with S13 that binds strongly to the 16S ribosomal RNA. This chain is Small ribosomal subunit protein uS19, found in Acidovorax sp. (strain JS42).